The sequence spans 920 residues: Protein translocase subunit SecA 2 (920 aa).

ATP contacts are provided by residues Gln-91, 109–113 (GEGKT), and Asp-527. Residues 859–870 (GEGSALDRRPTD) are compositionally biased toward basic and acidic residues. Residues 859-920 (GEGSALDRRP…KSRNRRRRKR (62 aa)) form a disordered region. Residues 906 to 920 (PHRPGKSRNRRRRKR) show a composition bias toward basic residues.

This sequence belongs to the SecA family. As to quaternary structure, monomer and homodimer. Part of the essential Sec protein translocation apparatus which comprises SecA, SecYEG and auxiliary proteins SecDF. Other proteins may also be involved.

The protein localises to the cell membrane. It is found in the cytoplasm. The catalysed reaction is ATP + H2O + cellular proteinSide 1 = ADP + phosphate + cellular proteinSide 2.. Part of the Sec protein translocase complex. Interacts with the SecYEG preprotein conducting channel. Has a central role in coupling the hydrolysis of ATP to the transfer of proteins into and across the cell membrane, serving as an ATP-driven molecular motor driving the stepwise translocation of polypeptide chains across the membrane. The sequence is that of Protein translocase subunit SecA 2 from Streptomyces avermitilis (strain ATCC 31267 / DSM 46492 / JCM 5070 / NBRC 14893 / NCIMB 12804 / NRRL 8165 / MA-4680).